Consider the following 112-residue polypeptide: Cryptic phage CTXphi transcriptional repressor RstR (112 aa).

An HTH cro/C1-type domain is found at 7–61; that stretch reads LANQRKAINKTQAQMADEIGISLTSYKKYESGEGLPTMENLVKIADALEISIDEL. The segment at residues 18 to 37 is a DNA-binding region (H-T-H motif); the sequence is QAQMADEIGISLTSYKKYES.

Its function is as follows. Transcriptional repressor of the integrated CTXPhi phage gene rstA2. The protein is Cryptic phage CTXphi transcriptional repressor RstR (rstR1) of Vibrio cholerae serotype O1 (strain ATCC 39315 / El Tor Inaba N16961).